A 595-amino-acid chain; its full sequence is Aspartate--tRNA ligase (595 aa).

E173 is a binding site for L-aspartate. The segment at 197-200 (QLFK) is aspartate. R219 is a binding site for L-aspartate. ATP-binding positions include 219-221 (RDE) and Q228. Residue H449 participates in L-aspartate binding. Residue E483 participates in ATP binding. R490 is a binding site for L-aspartate. Residue 535-538 (GLDR) coordinates ATP.

It belongs to the class-II aminoacyl-tRNA synthetase family. Type 1 subfamily. In terms of assembly, homodimer.

It localises to the cytoplasm. It carries out the reaction tRNA(Asp) + L-aspartate + ATP = L-aspartyl-tRNA(Asp) + AMP + diphosphate. Functionally, catalyzes the attachment of L-aspartate to tRNA(Asp) in a two-step reaction: L-aspartate is first activated by ATP to form Asp-AMP and then transferred to the acceptor end of tRNA(Asp). The chain is Aspartate--tRNA ligase from Shewanella sediminis (strain HAW-EB3).